Reading from the N-terminus, the 344-residue chain is Protein L-Myc-1-A (344 aa).

Disordered regions lie at residues 100–162 (RLTT…DDEI) and 209–261 (PPEP…EDIV). Polar residues-rich tracts occupy residues 102–112 (TTASPRATNPQ), 123–133 (PGVNSIEQNAN), and 236–255 (PALQQCSSPMPGSPLASGSS). Residues 261 to 313 (VKKKNHNYLERKRRNDLRSRFLALREEVPSLTRSTKTPKVVVLSKATEFLKGL) enclose the bHLH domain. The segment at 313 to 341 (LVIQEQQLTAEKFKLWSRHQQLLRRISHL) is leucine-zipper.

In terms of assembly, efficient DNA binding requires dimerization with another bHLH protein. Binds DNA as a heterodimer with MAX. High levels in oocytes, modest levels in kidney and low levels in spleen.

It is found in the nucleus. This is Protein L-Myc-1-A (mycl1-a) from Xenopus laevis (African clawed frog).